A 421-amino-acid chain; its full sequence is Phosphoribosylamine--glycine ligase (421 aa).

The ATP-grasp domain maps to 108 to 314 (KEIMVKYNVP…FAQNIDDIMM (207 aa)). 134–195 (IEEQGAPIVV…EEFLDGEEFS (62 aa)) serves as a coordination point for ATP. The Mg(2+) site is built by E284 and N286.

It belongs to the GARS family. Requires Mg(2+) as cofactor. Mn(2+) is required as a cofactor.

The enzyme catalyses 5-phospho-beta-D-ribosylamine + glycine + ATP = N(1)-(5-phospho-beta-D-ribosyl)glycinamide + ADP + phosphate + H(+). It participates in purine metabolism; IMP biosynthesis via de novo pathway; N(1)-(5-phospho-D-ribosyl)glycinamide from 5-phospho-alpha-D-ribose 1-diphosphate: step 2/2. The chain is Phosphoribosylamine--glycine ligase from Streptococcus pyogenes serotype M1.